Here is a 1472-residue protein sequence, read N- to C-terminus: ABC transporter FGM5 (1472 aa).

11 helical membrane-spanning segments follow: residues 32-52, 67-87, 100-120, 163-183, 197-217, 271-291, 316-336, 386-406, 412-432, 493-513, and 534-554; these read IILG…RVAT, FTKL…LILS, FAVA…ALSF, YAGV…LELQ, SPEE…IGIF, ALIV…GFQY, GLIG…ALFW, FHGL…CFLL, LAFI…TAIA, LLIM…VVAF, and LLTN…AAFV. The ABC transmembrane type-1 1 domain occupies 284–551; the sequence is IAMIGFQYAQ…MFQSVPAVIA (268 aa). The region spanning 605-834 is the ABC transporter 1 domain; sequence ISIVDGSFGW…GIYIPTLGLS (230 aa). 638 to 645 serves as a coordination point for ATP; that stretch reads GPVASGKS. N682, N696, N763, N784, and N843 each carry an N-linked (GlcNAc...) asparagine glycan. 4 consecutive transmembrane segments (helical) span residues 900–920, 938–958, 1003–1023, and 1024–1044; these read LLSG…MGWW, LFRG…VIFM, GELP…FAMA, and VVVA…FSII. The ABC transmembrane type-1 2 domain maps to 900-1139; sequence LLSGIMYAVG…VGVVAISTQL (240 aa). N-linked (GlcNAc...) asparagine glycosylation is present at N1101. Residues 1116–1136 form a helical membrane-spanning segment; the sequence is FLATFLNLIVMVLAVGVVAIS. The ABC transporter 2 domain occupies 1218-1468; it reads YKNDDESPAS…EGSWFSQLWA (251 aa). Residue 1255-1262 coordinates ATP; that stretch reads GRTGSGKS. N-linked (GlcNAc...) asparagine glycans are attached at residues N1277 and N1293.

Belongs to the ABC transporter superfamily. ABCC family. Conjugate transporter (TC 3.A.1.208) subfamily.

It localises to the cell membrane. It participates in secondary metabolite biosynthesis. In terms of biological role, ABC transporter; part of the Fg3_54/C64 gene cluster that mediates the biosynthesis of the octapeptide fusaoctaxin A, a virulence factor that is required for cell-to-cell invasiveness of plant host. The 2 nonribosomal peptide synthetases NRPS9 and NRPS5 form an assembly line which likely utilizes GABA as a starter unit (loaded on the unique module M1 of NRPS9) and sequentially incorporates seven extender units composed of the residues L-Ala, L-allo-Ile, L-Ser, L-Val, L-Ser, L-Leu and L-Leu, respectively. During the process, each of the residues that are tethered on modules M3-M7 of NRPS5 containing an E domain can undergo an epimerization reaction to produce a D-configuration before the transpeptidation reaction occurs. The elongation of the peptidyl chain might be terminated by module M8-mediated L-Leu incorporation, followed by R domain-catalyzed 4 electron reduction to release the resulting octapeptide from the assembly line as an alcohol. Fusaoctaxin A is cleaved by the cluster specific ABC transporter FGM5 to the pentapeptide fusapentaxin A and the tripeptide fusatrixin A. The other enzymes from the cluster, FGM1, FGM2, FGM3 and FGM9 seem not to be involved in the biosynthesis of fusaoctaxin A and their functions have still to be determined. This is ABC transporter FGM5 from Gibberella zeae (strain ATCC MYA-4620 / CBS 123657 / FGSC 9075 / NRRL 31084 / PH-1) (Wheat head blight fungus).